The sequence spans 447 residues: Mannose/glucose-specific lectin (447 aa).

A run of 3 repeats spans residues 1-149, 150-295, and 296-447. The tract at residues 1–447 is 3 X approximate tandem repeats; sequence SLKGMISVGP…GIFVKPDTAV (447 aa). Jacalin-type lectin domains lie at 5–148, 153–294, and 300–443; these read MISV…FVQP, TISF…YVKP, and SISI…FVKP.

The protein belongs to the jacalin lectin family. Homodimer. In terms of processing, the N-terminus is blocked.

Functionally, mannose/glucose specific lectin. Shows agglutinating activity against rabbit erythrocytes. The polypeptide is Mannose/glucose-specific lectin (Parkia platycephala).